Consider the following 286-residue polypeptide: Release factor glutamine methyltransferase (286 aa).

2 residues coordinate S-adenosyl-L-methionine: Asp-148 and Asn-194. Position 194-197 (Asn-194–Tyr-197) interacts with substrate.

The protein belongs to the protein N5-glutamine methyltransferase family. PrmC subfamily.

It carries out the reaction L-glutaminyl-[peptide chain release factor] + S-adenosyl-L-methionine = N(5)-methyl-L-glutaminyl-[peptide chain release factor] + S-adenosyl-L-homocysteine + H(+). Its function is as follows. Methylates the class 1 translation termination release factors RF1/PrfA and RF2/PrfB on the glutamine residue of the universally conserved GGQ motif. This Leptospira interrogans serogroup Icterohaemorrhagiae serovar Lai (strain 56601) protein is Release factor glutamine methyltransferase.